The chain runs to 325 residues: Protein UL76 (325 aa).

The interval 222–286 (ARASAVAGGR…VRGGGAVEPA (65 aa)) is disordered. A compositionally biased stretch (low complexity) spans 247-258 (GPGAQTVSASGA).

It belongs to the herpesviridae UL24 family.

Its subcellular location is the virion. It localises to the host cytoplasm. The protein resides in the host nucleus. It is found in the host nucleolus. The protein localises to the host Golgi apparatus. In terms of biological role, may participate in nuclear egress of viral particles. Plays a role in the dispersal of several host nucleolar proteins including NCL/nucleolin and NPM1. Since deletion of host NCL/nucleolin negatively impact on nuclear egress, UL76 supposedly acts on this process through its effect on host nucleoli. Induces cell cycle arrest in host cells at the G2/M phase following by apoptosis. The mechanism involves the inhibition of host mitotic complex cyclinB/CDK1. This Human cytomegalovirus (strain Merlin) (HHV-5) protein is Protein UL76 (UL76).